Here is a 584-residue protein sequence, read N- to C-terminus: Sperm-associated microtubule inner protein 4 (584 aa).

It is found in the cytoplasm. The protein resides in the cytoskeleton. The protein localises to the microtubule organizing center. Its subcellular location is the centrosome. It localises to the flagellum axoneme. In terms of biological role, microtubule inner protein (MIP) part of the dynein-decorated doublet microtubules (DMTs) in flagellum axoneme. May serve to reinforce and thus stabilize the microtubule structure in the sperm flagella. This is Sperm-associated microtubule inner protein 4 (SPMIP4) from Bos taurus (Bovine).